Here is a 165-residue protein sequence, read N- to C-terminus: Large ribosomal subunit protein uL10 (165 aa).

This sequence belongs to the universal ribosomal protein uL10 family. As to quaternary structure, part of the ribosomal stalk of the 50S ribosomal subunit. The N-terminus interacts with L11 and the large rRNA to form the base of the stalk. The C-terminus forms an elongated spine to which L12 dimers bind in a sequential fashion forming a multimeric L10(L12)X complex.

Forms part of the ribosomal stalk, playing a central role in the interaction of the ribosome with GTP-bound translation factors. The protein is Large ribosomal subunit protein uL10 of Sodalis glossinidius (strain morsitans).